The following is a 500-amino-acid chain: Melanopsin (500 aa).

Over 1 to 65 (MSHHSSWRGH…TVDVPDHAHY (65 aa)) the chain is Extracellular. The N-linked (GlcNAc...) asparagine glycan is linked to N18. A helical transmembrane segment spans residues 66-86 (IIGAVILIVGITGVIGNALVI). Over 87 to 101 (YVFCRSRTLRTAGNM) the chain is Cytoplasmic. A helical transmembrane segment spans residues 102-122 (FVVNLAVADFFMSLTQSPVFF). The Extracellular portion of the chain corresponds to 123–138 (AASLHRRWIFGERICE). Cysteines 137 and 215 form a disulfide. Residues 139-159 (LYAFCGALFGICSMMTLTAIA) traverse the membrane as a helical segment. The Cytoplasmic segment spans residues 160–182 (ADRCLAITQPLALVGNVSRRKAG). Residues 183-203 (AVLAVVWLYSLGWSLPPFFGW) traverse the membrane as a helical segment. At 204–232 (SAYVPEGLQTSCSWDYMTFTPSVRAYTIL) the chain is on the extracellular side. A helical transmembrane segment spans residues 233–253 (LFIFVFFIPLGIIVSCYVGIF). Residues 254 to 286 (QAIRAMGKEIRELDCGETQKVYERMQNEWKMAK) are Cytoplasmic-facing. Residues 287–307 (IALLVILLFVISWSPYSVVAL) form a helical membrane-spanning segment. Residues 308-322 (TATAGYSHLLTPYMN) lie on the Extracellular side of the membrane. The chain crosses the membrane as a helical span at residues 323–343 (SVPAVIAKASAIHNPIIYAIT). K330 carries the N6-(retinylidene)lysine modification. Residues 344–500 (HPKYRAAIAR…DGKALLLGGN (157 aa)) are Cytoplasmic-facing. Disordered regions lie at residues 406-428 (GKKRLSSASDSDSCWTESEADGS), 448-470 (VILSPGSSNSTASGQKSEKAHKV), and 481-500 (ETDSADESLSDGKALLLGGN). Composition is skewed to polar residues over residues 411-428 (SSASDSDSCWTESEADGS) and 448-462 (VILSPGSSNSTASGQ).

This sequence belongs to the G-protein coupled receptor 1 family. Opsin subfamily. Expressed in a subset of retinal horizontal cells as well as in retinal ganglion cells.

It localises to the cell membrane. Its function is as follows. Photoreceptor implicated in non-image-forming responses to light. This chain is Melanopsin (opn4), found in Rutilus rutilus (Roach).